The following is a 322-amino-acid chain: Zinc finger C2HC domain-containing protein zchc-1A (322 aa).

2 C2HC/C3H-type zinc fingers span residues 9-38 (PTFPCPICDRRFIKSSLEKHESACRKLASL) and 119-148 (DYVQCEYCSRNFNAAAAERHIPFCREQATR). Positions 13, 16, 28, 32, 123, 126, 138, and 142 each coordinate Zn(2+). Positions 150 to 159 (QGGNLKSSGG) are enriched in polar residues. The tract at residues 150–322 (QGGNLKSSGG…SRNNSRSRIF (173 aa)) is disordered. Over residues 174-220 (NEGKKQESSSRNGSAERKPTTRGRDGSLLRARRDDSNDITSRRKSLD) the composition is skewed to basic and acidic residues. Polar residues-rich tracts occupy residues 221-238 (TRTSLTTGQASNRHTSLS) and 264-274 (LQQSSTPQQRL). Over residues 276-295 (TPASTTTTASRSGSRTSSRA) the composition is skewed to low complexity. Over residues 296–305 (CPRDDSRDSR) the composition is skewed to basic and acidic residues. Positions 311–322 (NNSRNNSRSRIF) are enriched in low complexity.

The protein belongs to the ZC2HC1 family. Zn(2+) serves as cofactor.

In Caenorhabditis elegans, this protein is Zinc finger C2HC domain-containing protein zchc-1A.